The sequence spans 686 residues: Acyl-CoA synthetase short-chain family member 3, mitochondrial (686 aa).

Residues 1 to 29 (MKPSWLQCHKVTSAGGLGGPLPGSSPARG) constitute a mitochondrion transit peptide. 227–230 (EPGR) is a CoA binding site. ATP-binding positions include 425-427 (GER) and 446-451 (DHWWQT). The residue at position 518 (K518) is an N6-succinyllysine. N6-acetyllysine is present on K524. Residues D539, R554, and R565 each coordinate ATP. Residue R624 participates in CoA binding.

Belongs to the ATP-dependent AMP-binding enzyme family.

It is found in the mitochondrion matrix. The enzyme catalyses acetate + ATP + CoA = acetyl-CoA + AMP + diphosphate. The catalysed reaction is propanoate + ATP + CoA = propanoyl-CoA + AMP + diphosphate. It carries out the reaction butanoate + ATP + CoA = butanoyl-CoA + AMP + diphosphate. Catalyzes the synthesis of acetyl-CoA from short-chain fatty acids. Propionate is the preferred substrate but can also utilize acetate and butyrate with a much lower affinity. This Pongo abelii (Sumatran orangutan) protein is Acyl-CoA synthetase short-chain family member 3, mitochondrial (ACSS3).